The chain runs to 673 residues: F420-dependent formate dehydrogenase subunit alpha (673 aa).

In terms of domain architecture, 4Fe-4S Mo/W bis-MGD-type spans 3–59; it reads FKIVNTICPYCGVGCGLGLVVKDGRVIGIHPNKRHPINEGKLCAKGNYCYQFIHSKD. 4 residues coordinate [4Fe-4S] cluster: cysteine 10, cysteine 13, cysteine 17, and cysteine 45. Residue selenocysteine 131 is a non-standard amino acid, selenocysteine.

The protein belongs to the prokaryotic molybdopterin-containing oxidoreductase family. In terms of assembly, dimer of an alpha (FdhA) and a beta (FdhB) subunit. The cofactor is [4Fe-4S] cluster. Requires Mo-bis(molybdopterin guanine dinucleotide) as cofactor. Zn(2+) serves as cofactor.

The enzyme catalyses oxidized coenzyme F420-(gamma-L-Glu)(n) + formate + 2 H(+) = reduced coenzyme F420-(gamma-L-Glu)(n) + CO2. Catalyzes the oxidation of formate to carbon dioxide, with coenzyme F420 as the electron acceptor. The chain is F420-dependent formate dehydrogenase subunit alpha (fdhA) from Methanocaldococcus jannaschii (strain ATCC 43067 / DSM 2661 / JAL-1 / JCM 10045 / NBRC 100440) (Methanococcus jannaschii).